Consider the following 244-residue polypeptide: Diablo homolog, mitochondrial (244 aa).

The transit peptide at 1–38 (MASLPRRLIWSFSYILRESFPIVSRRNCVSLLRASWRK) directs the protein to the mitochondrion. Positions 50–54 (AIPVG) match the IAP-binding motif. Basic and acidic residues predominate over residues 207–218 (DEIKRTITEDKG). The disordered stretch occupies residues 207–244 (DEIKRTITEDKGNPPSGGSPRSSLSEEEEIPEAYLRED). The segment covering 220-229 (PPSGGSPRSS) has biased composition (low complexity).

Belongs to the Smac/DIABLO protein family. As to quaternary structure, homodimer.

The protein localises to the mitochondrion. In terms of biological role, promotes apoptosis. Acts by opposing the inhibitory activity of inhibitor of apoptosis proteins (IAP). This chain is Diablo homolog, mitochondrial, found in Xenopus tropicalis (Western clawed frog).